The sequence spans 1175 residues: Pyruvate carboxylase 1 (1175 aa).

A Biotin carboxylation domain is found at 31-481 (EFNKVMVANR…DTYFIDEHPE (451 aa)). Residues Lys-147, Glu-231, and His-266 each contribute to the ATP site. In terms of domain architecture, ATP-grasp spans 151-348 (RQAAIEAGVQ…LVQAQIRIAE (198 aa)). Residue Arg-323 is part of the active site. A Pyruvate carboxyltransferase domain is found at 559 to 828 (CMITDTTFRD…DTGLSLDDIS (270 aa)). Substrate-binding positions include 567–571 (RDAHQ) and Arg-640. Asp-568 serves as a coordination point for a divalent metal cation. A divalent metal cation-binding residues include Lys-737, His-767, and His-769. Lys-737 bears the N6-carboxylysine mark. Thr-904 provides a ligand contact to substrate. The Biotinyl-binding domain maps to 1099 to 1174 (RALPGVRGHI…SAGDLVVEVE (76 aa)). The residue at position 1140 (Lys-1140) is an N6-biotinyllysine.

In terms of assembly, interacts with sir-2.2 and sir-2.3. Biotin is required as a cofactor. Zn(2+) serves as cofactor.

Its subcellular location is the cytoplasm. It carries out the reaction hydrogencarbonate + pyruvate + ATP = oxaloacetate + ADP + phosphate + H(+). The protein operates within carbohydrate biosynthesis; gluconeogenesis. In terms of biological role, pyruvate carboxylase catalyzes a 2-step reaction, involving the ATP-dependent carboxylation of the covalently attached biotin in the first step and the transfer of the carboxyl group to pyruvate in the second. The polypeptide is Pyruvate carboxylase 1 (Caenorhabditis elegans).